The primary structure comprises 379 residues: Botryococcene C-methyltransferase (379 aa).

Residues 17-37 form a helical membrane-spanning segment; it reads LLTWKGAAGLAAAVALGYIII.

The protein belongs to the class I-like SAM-binding methyltransferase superfamily. Erg6/SMT family.

The protein localises to the microsome membrane. The catalysed reaction is C30 botryococcene + 2 S-adenosyl-L-methionine = 3,20-dimethyl-1,2,21,22-tetradehydro-2,3,20,21-tetrahydrobotryococcene + 2 S-adenosyl-L-homocysteine + 2 H(+). In terms of biological role, converts botryococcene to mono- and dimethyl derivatives, but not to tri- and tetramethylated products. Unable to methylate cycloartenol, zymosterol or lanosterol, but can also use squalene as substrate. Methylates both C-3 and C22 positions, but only C-3 position in monomethylated squalenes. In contrast, monomethylated botryococcene occured mainly at the C-20 position yielding showacene, but also at the C-3 position yielding isoshowacene. This is Botryococcene C-methyltransferase (TMT-3) from Botryococcus braunii (Green alga).